Reading from the N-terminus, the 20-residue chain is Large ribosomal subunit protein bL31 (20 aa).

Residues Xaa16 and Xaa18 each coordinate Zn(2+).

This sequence belongs to the bacterial ribosomal protein bL31 family. Type A subfamily. As to quaternary structure, part of the 50S ribosomal subunit. The cofactor is Zn(2+).

Its function is as follows. Binds the 23S rRNA. The chain is Large ribosomal subunit protein bL31 (rpmE) from Ectopseudomonas mendocina (Pseudomonas mendocina).